A 129-amino-acid chain; its full sequence is D-ribose pyranase (129 aa).

Histidine 20 serves as the catalytic Proton donor. Residues aspartate 28, histidine 96, and 118–120 contribute to the substrate site; that span reads YAN.

This sequence belongs to the RbsD / FucU family. RbsD subfamily. As to quaternary structure, homodecamer.

The protein localises to the cytoplasm. The catalysed reaction is beta-D-ribopyranose = beta-D-ribofuranose. The protein operates within carbohydrate metabolism; D-ribose degradation; D-ribose 5-phosphate from beta-D-ribopyranose: step 1/2. Catalyzes the interconversion of beta-pyran and beta-furan forms of D-ribose. The polypeptide is D-ribose pyranase (Exiguobacterium sibiricum (strain DSM 17290 / CCUG 55495 / CIP 109462 / JCM 13490 / 255-15)).